The chain runs to 884 residues: Androgen receptor (884 aa).

The interval 1 to 522 is modulating; sequence MEVQLGLGRV…PIDYYFPPQK (522 aa). The segment at 1 to 551 is interaction with ZNF318; that stretch reads MEVQLGLGRV…GSCKVFFKRA (551 aa). Disordered stretches follow at residues 33–145 and 174–207; these read VIQN…TLSL and QQQQQEAVSEGSSSGRAREAAGAPTSSKDSYLGG. Low complexity-rich tracts occupy residues 55–79 and 174–196; these read QQQQETSPPQQQQQQQGEDGSPQAQ and QQQQQEAVSEGSSSGRAREAAGA. Serine 61 is subject to Phosphoserine; by CDK9. The residue at position 75 (serine 75) is a Phosphoserine. Over residues 197–207 the composition is skewed to polar residues; the sequence is PTSSKDSYLGG. Tyrosine 204 is subject to Phosphotyrosine; by CSK. The residue at position 237 (serine 237) is a Phosphoserine. Position 248 is a phosphotyrosine; by CSK and TNK2 (tyrosine 248). The interval 275 to 294 is disordered; sequence DDSADKGTEEPAEYTPFKGS. Tyrosine 288, tyrosine 327, tyrosine 338, and tyrosine 343 each carry phosphotyrosine; by CSK. The residue at position 344 (tyrosine 344) is a Phosphotyrosine; by CSK and TNK2. Residue lysine 367 forms a Glycyl lysine isopeptide (Lys-Gly) (interchain with G-Cter in SUMO) linkage. Residue tyrosine 374 is modified to Phosphotyrosine; by CSK. A Glycyl lysine isopeptide (Lys-Gly) (interchain with G-Cter in SUMO) cross-link involves residue lysine 485. Phosphotyrosine; by CSK occurs at positions 499 and 516. Residues 516 to 883 are interaction with LPXN; sequence YYFPPQKTCL…GKVKPIYFHT (368 aa). The nuclear receptor DNA-binding region spans 523-596; the sequence is TCLICGDEAS…AGMTLGARKL (74 aa). 2 consecutive NR C4-type zinc fingers follow at residues 524–544 and 560–584; these read CLICGDEASGCHYGALTCGSC and CASRNDCTIDKFRRKNCPSCRLRKC. Residues 536 to 626 are interaction with HIPK3; that stretch reads YGALTCGSCK…TEESSQKLTV (91 aa). The tract at residues 556 to 883 is interaction with CCAR1; sequence QKYLCASRND…GKVKPIYFHT (328 aa). The interval 589–883 is interaction with KAT7; the sequence is MTLGARKLKK…GKVKPIYFHT (295 aa). Serine 615 carries the post-translational modification Phosphoserine; by STK4/MST1. The 232-residue stretch at 633 to 864 folds into the NR LBD domain; the sequence is ECQPIFLNVL…DFPEMMAEII (232 aa). 17beta-hydroxy-5alpha-androstan-3-one-binding residues include asparagine 670 and arginine 717. Glycyl lysine isopeptide (Lys-Gly) (interchain with G-Cter in ubiquitin) cross-links involve residues lysine 810 and lysine 812. Residue threonine 842 coordinates 17beta-hydroxy-5alpha-androstan-3-one. A Phosphotyrosine; by CSK modification is found at tyrosine 880.

The protein belongs to the nuclear hormone receptor family. NR3 subfamily. Binds DNA as a homodimer. Part of a ternary complex containing AR, EFCAB6/DJBP and PARK7. Interacts with HIPK3 and NR0B2 in the presence of androgen. The ligand binding domain interacts with KAT7/HBO1 in the presence of dihydrotestosterone. Interacts with EFCAB6/DJBP, PQBP1, RANBP9, RBAK, SPDEF, SRA1, TGFB1I1 and RREB1. Interacts with ZMIZ1/ZIMP10 and ZMIZ2/ZMIP7 which both enhance its transactivation activity. Interacts with SLC30A9 and RAD54L2/ARIP4. Interacts with MACROD1 (via macro domain). Interacts via the ligand-binding domain with LXXLL and FXXLF motifs from NCOA1, NCOA2, NCOA3 and MAGEA11. Interacts (via nuclear receptor DNA binding domain and nuclear receptor ligand binding domain) with NCOA4. The AR N-terminal poly-Gln region binds Ran resulting in enhancement of AR-mediated transactivation. Ran-binding decreases as the poly-Gln length increases. Interacts with HIP1 (via coiled coil domain). Interacts (via ligand-binding domain) with TRIM68. Interacts with TNK2. Interacts with USP26. Interacts with RNF6. Interacts (regulated by RNF6 probably through polyubiquitination) with RNF14; regulates AR transcriptional activity. Interacts with PRMT2 and TRIM24. Interacts with RACK1. Interacts with RANBP10; this interaction enhances dihydrotestosterone-induced AR transcriptional activity. Interacts with PRPF6 in a hormone-independent way; this interaction enhances dihydrotestosterone-induced AR transcriptional activity. Interacts with STK4/MST1. Interacts with ZIPK/DAPK3. Interacts with LPXN. Interacts with MAK. Part of a complex containing AR, MAK and NCOA3. Interacts with CRY1. Interacts with CCAR1 and GATA2. Interacts with ZNF318. Interacts with BUD31. Interacts with ARID4A. Interacts with ARID4B. Interacts (via NR LBD domain) with ZBTB7A; the interaction is direct and androgen-dependent. Interacts with NCOR1. Interacts with NCOR2. Interacts with CRY2 in a ligand-dependent manner. Phosphorylated in prostate cancer cells in response to several growth factors including EGF. Phosphorylation is induced by c-Src kinase (CSK). Tyr-499 is one of the major phosphorylation sites and an increase in phosphorylation and Src kinase activity is associated with prostate cancer progression. Phosphorylation by TNK2 enhances the DNA-binding and transcriptional activity. Phosphorylation at Ser-61 by CDK9 regulates AR promoter selectivity and cell growth. In terms of processing, sumoylated on Lys-367 (major) and Lys-485. Ubiquitinated. Deubiquitinated by USP26. 'Lys-6' and 'Lys-27'-linked polyubiquitination by RNF6 modulates AR transcriptional activity and specificity. Post-translationally, palmitoylated by ZDHHC7 and ZDHHC21. Palmitoylation is required for plasma membrane targeting and for rapid intracellular signaling via ERK and AKT kinases and cAMP generation.

The protein resides in the nucleus. It localises to the cytoplasm. Steroid hormone receptors are ligand-activated transcription factors that regulate eukaryotic gene expression and affect cellular proliferation and differentiation in target tissues. Transcription factor activity is modulated by bound coactivator and corepressor proteins like ZBTB7A that recruits NCOR1 and NCOR2 to the androgen response elements/ARE on target genes, negatively regulating androgen receptor signaling and androgen-induced cell proliferation. Transcription activation is also down-regulated by NR0B2. Activated, but not phosphorylated, by HIPK3 and ZIPK/DAPK3. This is Androgen receptor (AR) from Eulemur fulvus collaris (Collared brown lemur).